The primary structure comprises 100 residues: Aspartyl/glutamyl-tRNA(Asn/Gln) amidotransferase subunit C (100 aa).

Belongs to the GatC family. As to quaternary structure, heterotrimer of A, B and C subunits.

It catalyses the reaction L-glutamyl-tRNA(Gln) + L-glutamine + ATP + H2O = L-glutaminyl-tRNA(Gln) + L-glutamate + ADP + phosphate + H(+). The enzyme catalyses L-aspartyl-tRNA(Asn) + L-glutamine + ATP + H2O = L-asparaginyl-tRNA(Asn) + L-glutamate + ADP + phosphate + 2 H(+). In terms of biological role, allows the formation of correctly charged Asn-tRNA(Asn) or Gln-tRNA(Gln) through the transamidation of misacylated Asp-tRNA(Asn) or Glu-tRNA(Gln) in organisms which lack either or both of asparaginyl-tRNA or glutaminyl-tRNA synthetases. The reaction takes place in the presence of glutamine and ATP through an activated phospho-Asp-tRNA(Asn) or phospho-Glu-tRNA(Gln). This chain is Aspartyl/glutamyl-tRNA(Asn/Gln) amidotransferase subunit C, found in Staphylococcus haemolyticus (strain JCSC1435).